The sequence spans 181 residues: CDP-archaeol synthase (181 aa).

Helical transmembrane passes span 7 to 27, 55 to 75, 88 to 108, 126 to 146, and 147 to 167; these read VVWA…AVLA, LIGT…TPSV, LRAG…ASFL, LDFV…WFTE, and TFTL…HVVT.

Belongs to the CDP-archaeol synthase family. Mg(2+) is required as a cofactor.

It localises to the cell membrane. The catalysed reaction is 2,3-bis-O-(geranylgeranyl)-sn-glycerol 1-phosphate + CTP + H(+) = CDP-2,3-bis-O-(geranylgeranyl)-sn-glycerol + diphosphate. It participates in membrane lipid metabolism; glycerophospholipid metabolism. In terms of biological role, catalyzes the formation of CDP-2,3-bis-(O-geranylgeranyl)-sn-glycerol (CDP-archaeol) from 2,3-bis-(O-geranylgeranyl)-sn-glycerol 1-phosphate (DGGGP) and CTP. This reaction is the third ether-bond-formation step in the biosynthesis of archaeal membrane lipids. The polypeptide is CDP-archaeol synthase (Haloarcula marismortui (strain ATCC 43049 / DSM 3752 / JCM 8966 / VKM B-1809) (Halobacterium marismortui)).